Consider the following 295-residue polypeptide: Aquaporin-9 (295 aa).

The Cytoplasmic segment spans residues 1–24 (MPSEKDGAKKSLMQRLALKSRIAK). A helical transmembrane segment spans residues 25–43 (ETLSEFLGTFIMIVLGCSS). The Extracellular portion of the chain corresponds to 44-57 (IAQAVLSRERFGGI). A helical membrane pass occupies residues 58–77 (ITINIGFASAVVMALYVTFG). The Cytoplasmic segment spans residues 78 to 79 (IS). Residues 80 to 92 (GGHINPAVSFAMC) constitute an intramembrane region (discontinuously helical). The NPA 1 motif lies at 84–86 (NPA). The Cytoplasmic portion of the chain corresponds to 93-98 (AFGRME). A helical transmembrane segment spans residues 99–123 (WFKFPFYVGAQFLGAFVGAATVFGI). At 124–160 (YYDGLMAFAGGKLLVVGENATAFIFATYPAPFISTPG) the chain is on the extracellular side. The helical transmembrane segment at 161-178 (AFVDQVVSTMFLLLIVFA) threads the bilayer. Residues 179–190 (MFDSRNLGVPRG) are Cytoplasmic-facing. Residues 191–207 (LEPVVIGLLIIVLSCSL) traverse the membrane as a helical segment. Topologically, residues 208 to 210 (GLN) are extracellular. Residues 211–225 (SGCAMNPARDLSPRL) constitute an intramembrane region (discontinuously helical). Positions 216–218 (NPA) match the NPA 2 motif. The Extracellular portion of the chain corresponds to 226–243 (FTALAGWGFEVFTVGNNF). Residues 244–264 (WWIPVVGPMIGAFLGGLIYIL) traverse the membrane as a helical segment. The Cytoplasmic portion of the chain corresponds to 265 to 295 (FIQMHHSKLDPDMKAEPSENNLEKHELSVIM).

This sequence belongs to the MIP/aquaporin (TC 1.A.8) family. In terms of assembly, homotetramer; each monomer provides an independent glycerol/water pore. In terms of tissue distribution, detected in testis and liver. Detected in immature spermatocytes and in interstitial Leydig cells.

It is found in the cell membrane. Its subcellular location is the basolateral cell membrane. It carries out the reaction H2O(in) = H2O(out). The enzyme catalyses glycerol(in) = glycerol(out). It catalyses the reaction urea(in) = urea(out). The catalysed reaction is (S)-lactate(in) = (S)-lactate(out). It carries out the reaction NH4(+)(in) = NH4(+)(out). The enzyme catalyses uracil(in) = uracil(out). It catalyses the reaction adenine(out) = adenine(in). The catalysed reaction is 3-hydroxybutanoate(in) = 3-hydroxybutanoate(out). It carries out the reaction D-sorbitol(in) = D-sorbitol(out). The enzyme catalyses D-mannitol(in) = D-mannitol(out). It catalyses the reaction H2O2(out) = H2O2(in). The catalysed reaction is arsenite(in) = arsenite(out). It carries out the reaction selenite(in) = selenite(out). Channel activity is inhibited by mercury ions and phloretin. In terms of biological role, aquaglyceroporins form homotetrameric transmembrane channels, with each monomer independently mediating glycerol and water transport across the plasma membrane along their osmotic gradient. AQP9 is the primary route for glycerol uptake in hepatocytes, supporting hepatic gluconeogenesis. It exhibits broad specificity and may transport various small, non-charged solutes, including carbamides, polyols, purines, and pyrimidines. AQP9 may also facilitate hepatic urea extrusion. Due to its permeability to lactate, AQP9 might participate in the astrocyte-to-neuron lactate shuttle, supplying neurons with energy. Additionally, AQP9 is permeable to arsenite, contributing to arsenic excretion by the liver and providing partial protection against arsenic toxicity. It is also permeable to H2O2 in vivo. Could also be permeable to ammonium. This is Aquaporin-9 from Rattus norvegicus (Rat).